We begin with the raw amino-acid sequence, 865 residues long: DNA topoisomerase 1 (865 aa).

Residues 3–142 form the Toprim domain; sequence KALVIVESPA…RYSRVVFNEI (140 aa). Position 9 (Glu9) interacts with Mg(2+). A disordered region spans residues 37-65; that stretch reads LPTSGSAAKKSADSTSTKTAKKPKKDERG. Residues 39–54 show a composition bias toward low complexity; it reads TSGSAAKKSADSTSTK. Asp111 is a binding site for Mg(2+). Residues 158 to 575 form the Topo IA-type catalytic domain; it reads NINRVNAQQA…NFFSDFTQQL (418 aa). An interaction with DNA region spans residues 192–197; it reads SAGRVQ. The active-site O-(5'-phospho-DNA)-tyrosine intermediate is Tyr319. 3 consecutive C4-type zinc fingers follow at residues 599-630, 662-689, and 711-736; these read CPTC…KERC, CQKC…NPTC, and CEKC…NDEC.

It belongs to the type IA topoisomerase family. Monomer. Requires Mg(2+) as cofactor.

The catalysed reaction is ATP-independent breakage of single-stranded DNA, followed by passage and rejoining.. In terms of biological role, releases the supercoiling and torsional tension of DNA, which is introduced during the DNA replication and transcription, by transiently cleaving and rejoining one strand of the DNA duplex. Introduces a single-strand break via transesterification at a target site in duplex DNA. The scissile phosphodiester is attacked by the catalytic tyrosine of the enzyme, resulting in the formation of a DNA-(5'-phosphotyrosyl)-enzyme intermediate and the expulsion of a 3'-OH DNA strand. The free DNA strand then undergoes passage around the unbroken strand, thus removing DNA supercoils. Finally, in the religation step, the DNA 3'-OH attacks the covalent intermediate to expel the active-site tyrosine and restore the DNA phosphodiester backbone. This chain is DNA topoisomerase 1, found in Salmonella typhimurium (strain LT2 / SGSC1412 / ATCC 700720).